Consider the following 141-residue polypeptide: General odorant-binding protein 57b (141 aa).

The N-terminal stretch at 1 to 22 is a signal peptide; that stretch reads MFIYRLVFIAPLILLLFSLAKA. Disulfide bonds link Cys-39/Cys-77, Cys-73/Cys-120, and Cys-111/Cys-129.

Belongs to the PBP/GOBP family.

Its function is as follows. Present in the aqueous fluid surrounding olfactory sensory dendrites and are thought to aid in the capture and transport of hydrophobic odorants into and through this fluid. In Drosophila melanogaster (Fruit fly), this protein is General odorant-binding protein 57b.